Here is a 262-residue protein sequence, read N- to C-terminus: Nickel import ATP-binding protein NikD (262 aa).

Residues 6–249 (LAIEGLTATT…PGHEVTRMLV (244 aa)) form the ABC transporter domain. 42–49 (GASGSGKS) serves as a coordination point for ATP.

It belongs to the ABC transporter superfamily. Nickel importer (TC 3.A.1.5.3) family. The complex is composed of two ATP-binding proteins (NikD and NikE), two transmembrane proteins (NikB and NikC) and a solute-binding protein (NikA).

The protein localises to the cell inner membrane. The catalysed reaction is Ni(2+)(out) + ATP + H2O = Ni(2+)(in) + ADP + phosphate + H(+). Functionally, part of the ABC transporter complex NikABCDE involved in nickel import. Responsible for energy coupling to the transport system. The polypeptide is Nickel import ATP-binding protein NikD (Brucella suis biovar 1 (strain 1330)).